We begin with the raw amino-acid sequence, 634 residues long: Chaperone protein HtpG (634 aa).

Residues 1-342 (MTVETDKQTL…SSDLSLNVSR (342 aa)) form an a; substrate-binding region. The interval 343-559 (EILQSGPVVD…QGDLGLQMRQ (217 aa)) is b. Positions 560-634 (LLEASGQAVP…LNKLLLELSV (75 aa)) are c.

Belongs to the heat shock protein 90 family. Homodimer.

It is found in the cytoplasm. Its function is as follows. Molecular chaperone. Has ATPase activity. This chain is Chaperone protein HtpG, found in Xanthomonas euvesicatoria pv. vesicatoria (strain 85-10) (Xanthomonas campestris pv. vesicatoria).